The chain runs to 288 residues: uncharacterized protein (288 aa).

Low complexity predominate over residues Val-126–Pro-136. Disordered stretches follow at residues Val-126–Val-227 and Lys-258–Glu-288. Residues Arg-143–Lys-152 show a composition bias toward basic and acidic residues. Basic residues predominate over residues Asp-153 to Asn-162. Residues Val-180–Asp-194 are compositionally biased toward acidic residues. The span at Thr-278 to Glu-288 shows a compositional bias: basic and acidic residues.

It belongs to the chlamydial CPn_0623/CT_504/TC_0791 family.

This is an uncharacterized protein from Chlamydia trachomatis serovar D (strain ATCC VR-885 / DSM 19411 / UW-3/Cx).